The chain runs to 276 residues: 3-methyl-2-oxobutanoate hydroxymethyltransferase (276 aa).

Mg(2+)-binding residues include Asp45 and Asp84. 3-methyl-2-oxobutanoate is bound by residues 45–46, Asp84, and Lys114; that span reads DS. Glu116 is a binding site for Mg(2+). Catalysis depends on Glu183, which acts as the Proton acceptor.

The protein belongs to the PanB family. As to quaternary structure, homodecamer; pentamer of dimers. Requires Mg(2+) as cofactor.

The protein localises to the cytoplasm. The catalysed reaction is 3-methyl-2-oxobutanoate + (6R)-5,10-methylene-5,6,7,8-tetrahydrofolate + H2O = 2-dehydropantoate + (6S)-5,6,7,8-tetrahydrofolate. Its pathway is cofactor biosynthesis; (R)-pantothenate biosynthesis; (R)-pantoate from 3-methyl-2-oxobutanoate: step 1/2. Catalyzes the reversible reaction in which hydroxymethyl group from 5,10-methylenetetrahydrofolate is transferred onto alpha-ketoisovalerate to form ketopantoate. This is 3-methyl-2-oxobutanoate hydroxymethyltransferase from Syntrophomonas wolfei subsp. wolfei (strain DSM 2245B / Goettingen).